A 108-amino-acid polypeptide reads, in one-letter code: MGFNKEDRILINNNNSRISRGISERYKGKEGRIRSNMMGKRHDVKSLLEYLDSTCIPIENMLCNDDESSIKPQSKYHRQKKFRNNFSSQNKFHHQKIFPRQKFSKFHR.

This chain is Putative DNA-directed RNA polymerase subunit 1 inactive homolog, found in Acanthamoeba polyphaga (Amoeba).